Here is a 212-residue protein sequence, read N- to C-terminus: uncharacterized protein (212 aa).

S-adenosyl-L-methionine-binding residues include glycine 53, glutamate 74, and aspartate 97.

Belongs to the methyltransferase superfamily. YrrT family.

Could be a S-adenosyl-L-methionine-dependent methyltransferase. This is an uncharacterized protein from Bacillus cereus (strain ATCC 14579 / DSM 31 / CCUG 7414 / JCM 2152 / NBRC 15305 / NCIMB 9373 / NCTC 2599 / NRRL B-3711).